Consider the following 255-residue polypeptide: tRNA (guanine-N(7)-)-methyltransferase (255 aa).

4 residues coordinate S-adenosyl-L-methionine: Glu64, Glu89, Asp116, and Asp138. Asp138 is a catalytic residue. Substrate-binding positions include Lys142, Asp174, and 212–215; that span reads TRYE.

Belongs to the class I-like SAM-binding methyltransferase superfamily. TrmB family.

The catalysed reaction is guanosine(46) in tRNA + S-adenosyl-L-methionine = N(7)-methylguanosine(46) in tRNA + S-adenosyl-L-homocysteine. It participates in tRNA modification; N(7)-methylguanine-tRNA biosynthesis. Catalyzes the formation of N(7)-methylguanine at position 46 (m7G46) in tRNA. In Rhodospirillum rubrum (strain ATCC 11170 / ATH 1.1.1 / DSM 467 / LMG 4362 / NCIMB 8255 / S1), this protein is tRNA (guanine-N(7)-)-methyltransferase.